Reading from the N-terminus, the 31-residue chain is Glucagon-3 (31 aa).

This sequence belongs to the glucagon family.

It localises to the secreted. In terms of biological role, glucagon plays a key role in glucose metabolism and homeostasis. Regulates blood glucose by increasing gluconeogenesis and decreasing glycolysis. The polypeptide is Glucagon-3 (Huso dauricus (Kaluga sturgeon)).